A 155-amino-acid chain; its full sequence is Small ribosomal subunit protein uS17 (155 aa).

At alanine 2 the chain carries N-acetylalanine.

This sequence belongs to the universal ribosomal protein uS17 family.

The protein is Small ribosomal subunit protein uS17 of Drosophila pseudoobscura pseudoobscura (Fruit fly).